The chain runs to 159 residues: Phosphopantetheine adenylyltransferase (159 aa).

Thr10 lines the substrate pocket. ATP-binding positions include 10 to 11 (TF) and His18. Substrate-binding residues include Lys42, Leu74, and Arg88. ATP-binding positions include 89–91 (GLR), Glu99, and 124–130 (FAYVSSS).

The protein belongs to the bacterial CoaD family. As to quaternary structure, homohexamer. The cofactor is Mg(2+).

It localises to the cytoplasm. It catalyses the reaction (R)-4'-phosphopantetheine + ATP + H(+) = 3'-dephospho-CoA + diphosphate. It participates in cofactor biosynthesis; coenzyme A biosynthesis; CoA from (R)-pantothenate: step 4/5. Its function is as follows. Reversibly transfers an adenylyl group from ATP to 4'-phosphopantetheine, yielding dephospho-CoA (dPCoA) and pyrophosphate. This chain is Phosphopantetheine adenylyltransferase, found in Thioalkalivibrio sulfidiphilus (strain HL-EbGR7).